The following is a 389-amino-acid chain: Inner membrane transport protein YdhP (389 aa).

Topologically, residues 1–6 are cytoplasmic; it reads MKINYP. The helical transmembrane segment at 7–27 threads the bilayer; that stretch reads LLALAIGAFGIGTTEFSPMGL. Residues 28-43 are Periplasmic-facing; the sequence is LPVIARGVDVSIPAAG. The chain crosses the membrane as a helical span at residues 44-64; the sequence is MLISAYAVGVMVGAPLMTLLL. Topologically, residues 65–70 are cytoplasmic; it reads SHRARR. A helical transmembrane segment spans residues 71–91; the sequence is SALIFLMAIFTLGNVLSAIAP. Residues 92-100 lie on the Periplasmic side of the membrane; sequence DYMTLMLSR. Residues 101-121 traverse the membrane as a helical segment; sequence ILTSLNHGAFFGLGSVVAASV. Residues 122–130 lie on the Cytoplasmic side of the membrane; that stretch reads VPKHKQASA. A helical membrane pass occupies residues 131 to 151; sequence VATMFMGLTLANIGGVPAATW. Topologically, residues 152 to 159 are periplasmic; it reads LGETIGWR. A helical transmembrane segment spans residues 160-180; it reads MSFLATAGLGVISMVSLFFSL. At 181-203 the chain is on the cytoplasmic side; it reads PKGGAGARPEVKKELAVLMRPQV. Residues 204–224 form a helical membrane-spanning segment; that stretch reads LSALLTTVLGAGAMFTLYTYI. Topologically, residues 225–236 are periplasmic; sequence SPVLQSITHATP. A helical transmembrane segment spans residues 237-257; the sequence is VFVTAMLVLIGVGFSIGNYLG. The Cytoplasmic portion of the chain corresponds to 258–266; sequence GKLADRSVN. Residues 267 to 287 traverse the membrane as a helical segment; the sequence is GTLKGFLLLLMVIMLAIPFLA. Residues 288-290 lie on the Periplasmic side of the membrane; it reads RNE. Residues 291–311 form a helical membrane-spanning segment; it reads FGAAISMVVWGAATFAVVPPL. Over 312-330 the chain is Cytoplasmic; that stretch reads QMRVMRVASEAPGLSSSVN. The chain crosses the membrane as a helical span at residues 331-351; sequence IGAFNLGNALGAAAGGAVISA. At 352-356 the chain is on the periplasmic side; the sequence is GLGYS. A helical membrane pass occupies residues 357–377; it reads FVPVMGAIVAGLALLLVFMSA. Over 378–389 the chain is Cytoplasmic; sequence RKQPETVCVANS.

It belongs to the major facilitator superfamily.

It localises to the cell inner membrane. In Escherichia coli (strain K12), this protein is Inner membrane transport protein YdhP (ydhP).